Here is a 440-residue protein sequence, read N- to C-terminus: Asparagine--tRNA ligase (440 aa).

Belongs to the class-II aminoacyl-tRNA synthetase family. As to quaternary structure, homodimer.

The protein resides in the cytoplasm. It catalyses the reaction tRNA(Asn) + L-asparagine + ATP = L-asparaginyl-tRNA(Asn) + AMP + diphosphate + H(+). The protein is Asparagine--tRNA ligase of Roseiflexus castenholzii (strain DSM 13941 / HLO8).